Here is a 342-residue protein sequence, read N- to C-terminus: N-acetyl-gamma-glutamyl-phosphate reductase (342 aa).

C149 is a catalytic residue.

The protein belongs to the NAGSA dehydrogenase family. Type 1 subfamily.

The protein resides in the cytoplasm. It catalyses the reaction N-acetyl-L-glutamate 5-semialdehyde + phosphate + NADP(+) = N-acetyl-L-glutamyl 5-phosphate + NADPH + H(+). It participates in amino-acid biosynthesis; L-arginine biosynthesis; N(2)-acetyl-L-ornithine from L-glutamate: step 3/4. Catalyzes the NADPH-dependent reduction of N-acetyl-5-glutamyl phosphate to yield N-acetyl-L-glutamate 5-semialdehyde. The chain is N-acetyl-gamma-glutamyl-phosphate reductase from Laribacter hongkongensis (strain HLHK9).